The sequence spans 896 residues: Translation initiation factor IF-2 (896 aa).

Disordered stretches follow at residues 32-99 (LAQA…TALP) and 117-304 (EITS…KQAE). The segment covering 35–48 (AGSSDTKNSPASKA) has biased composition (polar residues). Over residues 153-169 (TPERIEETPIIRTRTEP) the composition is skewed to basic and acidic residues. Positions 203–214 (AASTEETTQQQP) are enriched in low complexity. Positions 215–227 (RQNDAASHNNKQQ) are enriched in polar residues. Residues 228 to 241 (PSGTSSRPASSAPS) show a composition bias toward low complexity. The segment covering 256–280 (RGSERDRSKRSDESVKAFTGRDRYG) has biased composition (basic and acidic residues). Positions 401 to 570 (IRSPIVAFMG…ALQAEVLELK (170 aa)) constitute a tr-type G domain. The tract at residues 410–417 (GHVDHGKT) is G1. 410-417 (GHVDHGKT) is a GTP binding site. Residues 435–439 (AITQH) are G2. The G3 stretch occupies residues 456-459 (DTPG). Residues 456–460 (DTPGH) and 510–513 (NKCD) contribute to the GTP site. The G4 stretch occupies residues 510 to 513 (NKCD). Positions 546–548 (SAK) are G5.

The protein belongs to the TRAFAC class translation factor GTPase superfamily. Classic translation factor GTPase family. IF-2 subfamily.

It is found in the cytoplasm. Functionally, one of the essential components for the initiation of protein synthesis. Protects formylmethionyl-tRNA from spontaneous hydrolysis and promotes its binding to the 30S ribosomal subunits. Also involved in the hydrolysis of GTP during the formation of the 70S ribosomal complex. This Chlamydia trachomatis serovar L2 (strain ATCC VR-902B / DSM 19102 / 434/Bu) protein is Translation initiation factor IF-2.